The following is a 191-amino-acid chain: UPF0312 protein Shewmr7_1249 (191 aa).

The N-terminal stretch at 1 to 22 is a signal peptide; that stretch reads MKKQLLAALIGGFLLAPMAASA.

It belongs to the UPF0312 family. Type 1 subfamily.

The protein resides in the periplasm. This chain is UPF0312 protein Shewmr7_1249, found in Shewanella sp. (strain MR-7).